Reading from the N-terminus, the 382-residue chain is Probable protein phosphatase 2C 65 (382 aa).

The 291-residue stretch at 47–337 (HVSMSIKQGK…DDCAVVVLYL (291 aa)) folds into the PPM-type phosphatase domain. Asp-83 and Gly-84 together coordinate Mn(2+). The segment at 107 to 126 (KIRSSKSAGDENIENNSSQS) is disordered. 2 residues coordinate Mn(2+): Asp-282 and Asp-328.

This sequence belongs to the PP2C family. It depends on Mg(2+) as a cofactor. The cofactor is Mn(2+).

The catalysed reaction is O-phospho-L-seryl-[protein] + H2O = L-seryl-[protein] + phosphate. The enzyme catalyses O-phospho-L-threonyl-[protein] + H2O = L-threonyl-[protein] + phosphate. This is Probable protein phosphatase 2C 65 from Arabidopsis thaliana (Mouse-ear cress).